Reading from the N-terminus, the 94-residue chain is MRTPDAQMRAGHIPAHLIPDGTDPRTVVVVHHQAEARDWTGPILLALVAAGGSVGVVMTLCLLLQTAATTATALAAAAPAGVGLSISLKARKGK.

The helical transmembrane segment at 41 to 68 (GPILLALVAAGGSVGVVMTLCLLLQTAA) threads the bilayer.

It is found in the cell membrane. Involved in plasmid transfer. The chain is Protein SpdA (spdA) from Streptomyces lividans.